The primary structure comprises 118 residues: Large ribosomal subunit protein mL53 (118 aa).

Residues 99 to 118 are disordered; the sequence is AAAASAPGADKVAPGTSTRR.

It belongs to the mitochondrion-specific ribosomal protein mL53 family. In terms of assembly, component of the mitochondrial ribosome large subunit (39S) which comprises a 16S rRNA and about 50 distinct proteins.

The protein localises to the mitochondrion. The protein is Large ribosomal subunit protein mL53 (Mrpl53) of Mus musculus (Mouse).